The sequence spans 494 residues: Glycerol kinase (494 aa).

Threonine 13 serves as a coordination point for ADP. ATP is bound by residues threonine 13, threonine 14, and serine 15. Residue threonine 13 coordinates sn-glycerol 3-phosphate. Position 17 (arginine 17) interacts with ADP. The sn-glycerol 3-phosphate site is built by arginine 83, glutamate 84, tyrosine 135, and aspartate 244. Glycerol is bound by residues arginine 83, glutamate 84, tyrosine 135, aspartate 244, and glutamine 245. ADP-binding residues include threonine 266 and glycine 309. Residues threonine 266, glycine 309, glutamine 313, and glycine 410 each coordinate ATP. ADP is bound by residues glycine 410 and asparagine 414.

It belongs to the FGGY kinase family.

It catalyses the reaction glycerol + ATP = sn-glycerol 3-phosphate + ADP + H(+). Its pathway is polyol metabolism; glycerol degradation via glycerol kinase pathway; sn-glycerol 3-phosphate from glycerol: step 1/1. Its activity is regulated as follows. Inhibited by fructose 1,6-bisphosphate (FBP). In terms of biological role, key enzyme in the regulation of glycerol uptake and metabolism. Catalyzes the phosphorylation of glycerol to yield sn-glycerol 3-phosphate. The chain is Glycerol kinase from Shewanella sp. (strain MR-7).